The following is a 632-amino-acid chain: tRNA uridine 5-carboxymethylaminomethyl modification enzyme MnmG (632 aa).

FAD contacts are provided by residues 13 to 18, valine 125, and serine 180; that span reads GGGHAG. NAD(+) is bound at residue 273-287; that stretch reads GPRYCPSIEDKINRF. Residue glutamine 370 coordinates FAD.

The protein belongs to the MnmG family. Homodimer. Heterotetramer of two MnmE and two MnmG subunits. FAD is required as a cofactor.

Its subcellular location is the cytoplasm. In terms of biological role, NAD-binding protein involved in the addition of a carboxymethylaminomethyl (cmnm) group at the wobble position (U34) of certain tRNAs, forming tRNA-cmnm(5)s(2)U34. The polypeptide is tRNA uridine 5-carboxymethylaminomethyl modification enzyme MnmG (Shewanella sediminis (strain HAW-EB3)).